Consider the following 320-residue polypeptide: Acetyl-coenzyme A carboxylase carboxyl transferase subunit alpha (320 aa).

In terms of domain architecture, CoA carboxyltransferase C-terminal spans I42 to D295.

This sequence belongs to the AccA family. Acetyl-CoA carboxylase is a heterohexamer composed of biotin carboxyl carrier protein (AccB), biotin carboxylase (AccC) and two subunits each of ACCase subunit alpha (AccA) and ACCase subunit beta (AccD).

It is found in the cytoplasm. The catalysed reaction is N(6)-carboxybiotinyl-L-lysyl-[protein] + acetyl-CoA = N(6)-biotinyl-L-lysyl-[protein] + malonyl-CoA. The protein operates within lipid metabolism; malonyl-CoA biosynthesis; malonyl-CoA from acetyl-CoA: step 1/1. In terms of biological role, component of the acetyl coenzyme A carboxylase (ACC) complex. First, biotin carboxylase catalyzes the carboxylation of biotin on its carrier protein (BCCP) and then the CO(2) group is transferred by the carboxyltransferase to acetyl-CoA to form malonyl-CoA. In Rhodopseudomonas palustris (strain BisA53), this protein is Acetyl-coenzyme A carboxylase carboxyl transferase subunit alpha.